Consider the following 569-residue polypeptide: Mitogen-activated protein kinase 7 (569 aa).

The Protein kinase domain maps to 13-304 (YKIQEIVGKG…AEEALADPYF (292 aa)). ATP-binding positions include 19 to 27 (VGKGSYGVV) and Lys42. The active-site Proton acceptor is the Asp139. At Thr175 the chain carries Phosphothreonine. The short motif at 175-177 (TDY) is the TXY element. Tyr177 bears the Phosphotyrosine mark. The disordered stretch occupies residues 401-420 (TTVHSTSIPPNEGLDATSQV).

It belongs to the protein kinase superfamily. CMGC Ser/Thr protein kinase family. MAP kinase subfamily. Dually phosphorylated on Thr-175 and Tyr-177, which activates the enzyme.

It carries out the reaction L-seryl-[protein] + ATP = O-phospho-L-seryl-[protein] + ADP + H(+). The enzyme catalyses L-threonyl-[protein] + ATP = O-phospho-L-threonyl-[protein] + ADP + H(+). With respect to regulation, activated by threonine and tyrosine phosphorylation. The polypeptide is Mitogen-activated protein kinase 7 (MPK7) (Oryza sativa subsp. japonica (Rice)).